The primary structure comprises 215 residues: Cytochrome b6 (215 aa).

The helical transmembrane segment at 32–52 (IFYCLGGITLTCFLVQVATGF) threads the bilayer. A heme c-binding site is contributed by Cys-35. Residues His-86 and His-100 each coordinate heme b. The next 3 membrane-spanning stretches (helical) occupy residues 90-110 (ASMM…TGGF), 116-136 (LTWV…VTGY), and 186-206 (LHTF…FPMI). Residues His-187 and His-202 each coordinate heme b.

The protein belongs to the cytochrome b family. PetB subfamily. The 4 large subunits of the cytochrome b6-f complex are cytochrome b6, subunit IV (17 kDa polypeptide, PetD), cytochrome f and the Rieske protein, while the 4 small subunits are PetG, PetL, PetM and PetN. The complex functions as a dimer. Heme b is required as a cofactor. The cofactor is heme c.

Its subcellular location is the plastid. It localises to the chloroplast thylakoid membrane. In terms of biological role, component of the cytochrome b6-f complex, which mediates electron transfer between photosystem II (PSII) and photosystem I (PSI), cyclic electron flow around PSI, and state transitions. The chain is Cytochrome b6 from Lactuca sativa (Garden lettuce).